Consider the following 171-residue polypeptide: Large ribosomal subunit protein uL10 (171 aa).

It belongs to the universal ribosomal protein uL10 family. In terms of assembly, part of the ribosomal stalk of the 50S ribosomal subunit. The N-terminus interacts with L11 and the large rRNA to form the base of the stalk. The C-terminus forms an elongated spine to which L12 dimers bind in a sequential fashion forming a multimeric L10(L12)X complex.

In terms of biological role, forms part of the ribosomal stalk, playing a central role in the interaction of the ribosome with GTP-bound translation factors. The sequence is that of Large ribosomal subunit protein uL10 from Paramagnetospirillum magneticum (strain ATCC 700264 / AMB-1) (Magnetospirillum magneticum).